A 542-amino-acid chain; its full sequence is Chaperonin GroEL 2 (542 aa).

ATP is bound by residues 30-33, Lys51, 87-91, Gly415, and Asp496; these read TLGP and DGTTT.

The protein belongs to the chaperonin (HSP60) family. In terms of assembly, forms a cylinder of 14 subunits composed of two heptameric rings stacked back-to-back. Interacts with the co-chaperonin GroES.

It localises to the cytoplasm. The enzyme catalyses ATP + H2O + a folded polypeptide = ADP + phosphate + an unfolded polypeptide.. Together with its co-chaperonin GroES, plays an essential role in assisting protein folding. The GroEL-GroES system forms a nano-cage that allows encapsulation of the non-native substrate proteins and provides a physical environment optimized to promote and accelerate protein folding. In Sinorhizobium fredii (strain NBRC 101917 / NGR234), this protein is Chaperonin GroEL 2.